A 524-amino-acid chain; its full sequence is Serine/threonine-protein kinase PAK 2 (524 aa).

Residues 1–81 are disordered; the sequence is MSDNGELEDK…PEISPPSDFE (81 aa). Serine 2 is subject to N-acetylserine. Serine 2, serine 20, serine 55, serine 58, and serine 59 each carry phosphoserine. Residue threonine 60 is modified to Phosphothreonine. Lysine 62 bears the N6-acetyllysine mark. A Phosphoserine modification is found at serine 64. Basic and acidic residues predominate over residues 67–81; it reads KEKERPEISPPSDFE. Positions 69-112 are GTPase-binding; that stretch reads KERPEISPPSDFEHTIHVGFDAVTGEFTGMPEQWARLLQTSNIT. Positions 69-137 are autoregulatory region; that stretch reads KERPEISPPS…KFYDSNTVKQ (69 aa). The CRIB domain maps to 74 to 87; the sequence is ISPPSDFEHTIHVG. Residues 88–248 are linker; it reads FDAVTGEFTG…IVSIGDPKKK (161 aa). N6-acetyllysine is present on lysine 128. A Phosphothreonine modification is found at threonine 134. Tyrosine 139 carries the post-translational modification Phosphotyrosine. Serine 141 carries the phosphoserine modification. The tract at residues 142 to 190 is disordered; it reads FTPPEKDGFPSGTPALNTKGSETSAVVTEEDDDDEDAAPPVIAPRPDHT. Threonine 143 carries the post-translational modification Phosphothreonine. A Phosphoserine modification is found at serine 152. Threonine 154, threonine 159, and threonine 169 each carry phosphothreonine. The span at 155–167 shows a compositional bias: polar residues; it reads PALNTKGSETSAV. The segment covering 169–178 has biased composition (acidic residues); it reads TEEDDDDEDA. A Phosphoserine modification is found at serine 197. A disordered region spans residues 204–228; that stretch reads APVGDSNVDSGAKSSDKQKKKAKMT. The Nuclear localization signal signature appears at 245–251; sequence PKKKYTR. Residues 249-500 enclose the Protein kinase domain; sequence YTRYEKIGQG…AKELLQHPFL (252 aa). ATP contacts are provided by residues 255 to 263 and lysine 278; that span reads IGQGASGTV. Catalysis depends on aspartate 368, which acts as the Proton acceptor. At threonine 402 the chain carries Phosphothreonine; by autocatalysis.

The protein belongs to the protein kinase superfamily. STE Ser/Thr protein kinase family. STE20 subfamily. As to quaternary structure, interacts tightly with GTP-bound but not GDP-bound CDC42/p21 and RAC1. Interacts with SH3MD4. Interacts with SCRIB. Interacts with ARHGEF7 and GIT1. PAK-2p34 interacts with ARHGAP10. Interacts with RAC1. Post-translationally, full-length PAK2 is autophosphorylated when activated by CDC42/p21. Following cleavage, both peptides, PAK-2p27 and PAK-2p34, become highly autophosphorylated. Autophosphorylation of PAK-2p27 can occur in the absence of any effectors and is dependent on phosphorylation of Thr-402, because PAK-2p27 is acting as an exogenous substrate. During apoptosis proteolytically cleaved by caspase-3 or caspase-3-like proteases to yield active PAK-2p34. In terms of processing, ubiquitinated, leading to its proteasomal degradation.

It localises to the cytoplasm. The protein localises to the nucleus. The protein resides in the perinuclear region. It is found in the membrane. It catalyses the reaction L-seryl-[protein] + ATP = O-phospho-L-seryl-[protein] + ADP + H(+). It carries out the reaction L-threonyl-[protein] + ATP = O-phospho-L-threonyl-[protein] + ADP + H(+). Activated by binding small G proteins. Binding of GTP-bound CDC42 or RAC1 to the autoregulatory region releases monomers from the autoinhibited dimer, enables phosphorylation of Thr-402 and allows the kinase domain to adopt an active structure. Following caspase cleavage, autophosphorylated PAK-2p34 is constitutively active. Serine/threonine protein kinase that plays a role in a variety of different signaling pathways including cytoskeleton regulation, cell motility, cell cycle progression, apoptosis or proliferation. Acts as a downstream effector of the small GTPases CDC42 and RAC1. Activation by the binding of active CDC42 and RAC1 results in a conformational change and a subsequent autophosphorylation on several serine and/or threonine residues. Full-length PAK2 stimulates cell survival and cell growth. Phosphorylates MAPK4 and MAPK6 and activates the downstream target MAPKAPK5, a regulator of F-actin polymerization and cell migration. Phosphorylates JUN and plays an important role in EGF-induced cell proliferation. Phosphorylates many other substrates including histone H4 to promote assembly of H3.3 and H4 into nucleosomes, BAD, ribosomal protein S6, or MBP. Phosphorylates CASP7, thereby preventing its activity. Additionally, associates with ARHGEF7 and GIT1 to perform kinase-independent functions such as spindle orientation control during mitosis. On the other hand, apoptotic stimuli such as DNA damage lead to caspase-mediated cleavage of PAK2, generating PAK-2p34, an active p34 fragment that translocates to the nucleus and promotes cellular apoptosis involving the JNK signaling pathway. Caspase-activated PAK2 phosphorylates MKNK1 and reduces cellular translation. In Rattus norvegicus (Rat), this protein is Serine/threonine-protein kinase PAK 2 (Pak2).